An 883-amino-acid polypeptide reads, in one-letter code: Phosphoenolpyruvate carboxylase (883 aa).

Active-site residues include His-138 and Lys-546.

Belongs to the PEPCase type 1 family. Requires Mg(2+) as cofactor.

The catalysed reaction is oxaloacetate + phosphate = phosphoenolpyruvate + hydrogencarbonate. Functionally, forms oxaloacetate, a four-carbon dicarboxylic acid source for the tricarboxylic acid cycle. This Escherichia coli O45:K1 (strain S88 / ExPEC) protein is Phosphoenolpyruvate carboxylase.